A 273-amino-acid polypeptide reads, in one-letter code: Protein B4 (273 aa).

The interval 1 to 24 (MAPKKAVAAPEGGNKENAAVKGSS) is disordered. In terms of domain architecture, H15 spans 40–118 (SHPPTLSMVV…GATGRFKLAK (79 aa)). The segment at 120 to 273 (VKTTKAGKEN…AGKKGKKVTN (154 aa)) is disordered. A compositionally biased stretch (basic and acidic residues) spans 154 to 256 (AKTEKEPKGE…KDVKAQKDST (103 aa)). Repeat copies occupy residues 189–198 (KEAKEVDKAN), 199–208 (KEAKEVDKAN), and 209–217 (KEAKEVDKA). A 3 X 10 AA tandem repeats region spans residues 189-217 (KEAKEVDKANKEAKEVDKANKEAKEVDKA). Over residues 264 to 273 (AGKKGKKVTN) the composition is skewed to basic residues.

The protein belongs to the histone H1/H5 family. In terms of assembly, interacts with nap1l1.

The protein resides in the nucleus. It localises to the chromosome. This is Protein B4 (b4) from Xenopus laevis (African clawed frog).